A 67-amino-acid polypeptide reads, in one-letter code: UPF0434 protein Bcep1808_2639 (67 aa).

The protein belongs to the UPF0434 family.

The chain is UPF0434 protein Bcep1808_2639 from Burkholderia vietnamiensis (strain G4 / LMG 22486) (Burkholderia cepacia (strain R1808)).